The sequence spans 152 residues: Large ribosomal subunit protein uL22 (152 aa).

Belongs to the universal ribosomal protein uL22 family. Part of the 50S ribosomal subunit.

In terms of biological role, this protein binds specifically to 23S rRNA. It makes multiple contacts with different domains of the 23S rRNA in the assembled 50S subunit and ribosome. Its function is as follows. The globular domain of the protein is located near the polypeptide exit tunnel on the outside of the subunit, while an extended beta-hairpin is found that lines the wall of the exit tunnel in the center of the 70S ribosome. The polypeptide is Large ribosomal subunit protein uL22 (Methanothrix thermoacetophila (strain DSM 6194 / JCM 14653 / NBRC 101360 / PT) (Methanosaeta thermophila)).